Here is a 174-residue protein sequence, read N- to C-terminus: NAD(P)H-quinone oxidoreductase subunit J, chloroplastic (174 aa).

Belongs to the complex I 30 kDa subunit family. NDH is composed of at least 16 different subunits, 5 of which are encoded in the nucleus.

The protein resides in the plastid. The protein localises to the chloroplast thylakoid membrane. The enzyme catalyses a plastoquinone + NADH + (n+1) H(+)(in) = a plastoquinol + NAD(+) + n H(+)(out). The catalysed reaction is a plastoquinone + NADPH + (n+1) H(+)(in) = a plastoquinol + NADP(+) + n H(+)(out). Functionally, NDH shuttles electrons from NAD(P)H:plastoquinone, via FMN and iron-sulfur (Fe-S) centers, to quinones in the photosynthetic chain and possibly in a chloroplast respiratory chain. The immediate electron acceptor for the enzyme in this species is believed to be plastoquinone. Couples the redox reaction to proton translocation, and thus conserves the redox energy in a proton gradient. The polypeptide is NAD(P)H-quinone oxidoreductase subunit J, chloroplastic (Mesostigma viride (Green alga)).